The sequence spans 436 residues: GTPase Der (436 aa).

2 EngA-type G domains span residues proline 4–glycine 167 and isoleucine 176–alanine 351. GTP contacts are provided by residues glycine 10–serine 17, aspartate 57–isoleucine 61, asparagine 119–aspartate 122, glycine 182–serine 189, aspartate 229–methionine 233, and asparagine 294–aspartate 297. The 85-residue stretch at methionine 352–lysine 436 folds into the KH-like domain.

Belongs to the TRAFAC class TrmE-Era-EngA-EngB-Septin-like GTPase superfamily. EngA (Der) GTPase family. In terms of assembly, associates with the 50S ribosomal subunit.

Its function is as follows. GTPase that plays an essential role in the late steps of ribosome biogenesis. The chain is GTPase Der from Geobacillus sp. (strain WCH70).